Here is a 550-residue protein sequence, read N- to C-terminus: Sterol O-acyltransferase 1 (550 aa).

M1 carries the post-translational modification N-acetylmethionine. The segment at M1–A36 is disordered. The Cytoplasmic segment spans residues M1–I138. S8 bears the Phosphoserine mark. A compositionally biased stretch (basic and acidic residues) spans K15 to L34. H137 lines the cholesterol pocket. Residues R139–D160 form a helical membrane-spanning segment. Topologically, residues Y161–K180 are lumenal. A helical transmembrane segment spans residues F181–W206. Topologically, residues A207–I218 are cytoplasmic. Residues N219 to L244 form a helical membrane-spanning segment. At A245–S252 the chain is on the lumenal side. A helical transmembrane segment spans residues R253–P276. Residues R277 to R319 are Cytoplasmic-facing. Residues W320 to I352 form a helical membrane-spanning segment. At K353–S369 the chain is on the lumenal side. A helical transmembrane segment spans residues I370 to M395. The Cytoplasmic segment spans residues L396 to R443. Positions F403 to N409 match the FYXDWWN motif motif. Residues N415, R418, N421, H425, Y433, K445, and S456 each coordinate an acyl-CoA. A helical transmembrane segment spans residues F444–L468. The active site involves H460. The Lumenal segment spans residues S469–V474. Residues L475–V490 form a helical membrane-spanning segment. At N491 to K496 the chain is on the cytoplasmic side. Residues P497–C528 traverse the membrane as a helical segment. Cysteines 528 and 546 form a disulfide. At P529–F550 the chain is on the lumenal side.

This sequence belongs to the membrane-bound acyltransferase family. Sterol o-acyltransferase subfamily. As to quaternary structure, may form homo- or heterodimers. Interacts with UBIAD1. Expressed in most tissues, but most strongly in the adrenal gland. Expressed more strongly in liver Kupffer cells than in hepatocytes.

Its subcellular location is the endoplasmic reticulum membrane. It carries out the reaction a sterol + a long-chain fatty acyl-CoA = a long-chain 3-hydroxysterol ester + CoA. It catalyses the reaction cholesterol + an acyl-CoA = a cholesterol ester + CoA. The enzyme catalyses cholesterol + (9Z)-octadecenoyl-CoA = cholesteryl (9Z-octadecenoate) + CoA. The catalysed reaction is cholesterol + hexadecanoyl-CoA = cholesteryl hexadecanoate + CoA. It carries out the reaction octadecanoyl-CoA + cholesterol = cholesteryl octadecanoate + CoA. It catalyses the reaction (9Z,12Z)-octadecadienoyl-CoA + cholesterol = cholesteryl (9Z,12Z)-octadecadienoate + CoA. The enzyme catalyses (5Z,8Z,11Z,14Z)-eicosatetraenoyl-CoA + cholesterol = cholesteryl (5Z,8Z,11Z,14Z)-eicosatetraenoate + CoA. The catalysed reaction is (9Z)-hexadecenoyl-CoA + cholesterol = cholesteryl (9Z)-hexadecenoate + CoA. It carries out the reaction (11Z)-octadecenoyl-CoA + cholesterol = cholesteryl (11Z)-octadecenoate + CoA. It catalyses the reaction (7Z)-octadecenoyl-CoA + cholesterol = cholesteryl (7Z)-octadecenoate + CoA. Its function is as follows. Catalyzes the formation of fatty acid-cholesterol esters, which are less soluble in membranes than cholesterol. Plays a role in lipoprotein assembly and dietary cholesterol absorption. Preferentially utilizes oleoyl-CoA ((9Z)-octadecenoyl-CoA) as a substrate: shows a higher activity towards an acyl-CoA substrate with a double bond at the delta-9 position (9Z) than towards saturated acyl-CoA or an unsaturated acyl-CoA with a double bond at the delta-7 (7Z) or delta-11 (11Z) positions. In Chlorocebus aethiops (Green monkey), this protein is Sterol O-acyltransferase 1 (SOAT1).